We begin with the raw amino-acid sequence, 349 residues long: tRNA pseudouridine synthase D (349 aa).

F27 serves as a coordination point for substrate. The Nucleophile role is filled by D80. Residue N129 participates in substrate binding. Residues 155 to 303 (GVPNYFGPQR…VEAARRAMLL (149 aa)) enclose the TRUD domain. F329 is a binding site for substrate.

This sequence belongs to the pseudouridine synthase TruD family.

It carries out the reaction uridine(13) in tRNA = pseudouridine(13) in tRNA. In terms of biological role, responsible for synthesis of pseudouridine from uracil-13 in transfer RNAs. In Cronobacter sakazakii (strain ATCC BAA-894) (Enterobacter sakazakii), this protein is tRNA pseudouridine synthase D.